The following is a 346-amino-acid chain: Fe(3+) ions import ATP-binding protein FbpC 3 (346 aa).

An ABC transporter domain is found at 5-235; that stretch reads LEVDGVDKSF…PIDVATAEFI (231 aa). Position 37–44 (37–44) interacts with ATP; sequence GPSGCGKT.

Belongs to the ABC transporter superfamily. Fe(3+) ion importer (TC 3.A.1.10) family. The complex is composed of two ATP-binding proteins (FbpC), two transmembrane proteins (FbpB) and a solute-binding protein (FbpA).

Its subcellular location is the cell membrane. The catalysed reaction is Fe(3+)(out) + ATP + H2O = Fe(3+)(in) + ADP + phosphate + H(+). Functionally, part of the ABC transporter complex FbpABC involved in Fe(3+) ions import. Responsible for energy coupling to the transport system. The protein is Fe(3+) ions import ATP-binding protein FbpC 3 of Rhodococcus jostii (strain RHA1).